The following is a 443-amino-acid chain: Threonine/serine transporter TdcC (443 aa).

Helical transmembrane passes span 22 to 42 (TTWTLGLFGTAIGAGVLFFPI), 44 to 64 (AGFGGLIPILLMLVLAYPIAF), 97 to 117 (GVVITFLYFFAICPLLWIYGV), 140 to 160 (FVALFLLLLMAFVIWFGKDLM), 163 to 183 (VMSFLVFPFIASLILISLSLI), 207 to 227 (ILVTVWLGISIMVFSFNFSPI), 259 to 279 (ASLLMVAVVMFFAFSCLFTLS), 319 to 339 (ASIIALVAIFKSFFGHYLGTL), 366 to 386 (ISMIFIMGSTWVVAYANPNIL), 389 to 409 (IEAMGAPIIASLLCLLPMFAI), and 423 to 443 (ENLFVTAVGLLTILNIVYKLF).

Belongs to the amino acid/polyamine transporter 2 family. SdaC/TdcC subfamily.

It is found in the cell inner membrane. It carries out the reaction L-threonine(in) + H(+)(in) = L-threonine(out) + H(+)(out). The enzyme catalyses L-serine(in) + H(+)(in) = L-serine(out) + H(+)(out). Involved in the import of threonine and serine into the cell, with the concomitant import of a proton (symport system). This chain is Threonine/serine transporter TdcC, found in Enterobacter sp. (strain 638).